We begin with the raw amino-acid sequence, 240 residues long: Alkaline phosphatase synthesis transcriptional regulatory protein PhoP (240 aa).

Positions 4–118 constitute a Response regulatory domain; the sequence is KILVVDDEES…EVNARVKAIL (115 aa). Aspartate 53 carries the 4-aspartylphosphate modification. The ompR/PhoB-type DNA-binding region spans 136–235; the sequence is EGQIVIGDLK…IRGLGYKLEE (100 aa).

Post-translationally, phosphorylated by PhoR.

The protein resides in the cytoplasm. Its function is as follows. Member of the two-component regulatory system PhoP/PhoR involved in the regulation of alkaline phosphatase genes phoA and phoB and of phosphodiesterase. This Bacillus subtilis (strain 168) protein is Alkaline phosphatase synthesis transcriptional regulatory protein PhoP (phoP).